Consider the following 134-residue polypeptide: Endoribonuclease YbeY (134 aa).

Residues histidine 94, histidine 98, and histidine 104 each coordinate Zn(2+).

This sequence belongs to the endoribonuclease YbeY family. Zn(2+) is required as a cofactor.

It localises to the cytoplasm. Functionally, single strand-specific metallo-endoribonuclease involved in late-stage 70S ribosome quality control and in maturation of the 3' terminus of the 16S rRNA. The chain is Endoribonuclease YbeY from Campylobacter fetus subsp. fetus (strain 82-40).